A 121-amino-acid polypeptide reads, in one-letter code: Large ribosomal subunit protein uL14 (121 aa).

This sequence belongs to the universal ribosomal protein uL14 family. In terms of assembly, part of the 50S ribosomal subunit. Forms a cluster with proteins L3 and L19. In the 70S ribosome, L14 and L19 interact and together make contacts with the 16S rRNA in bridges B5 and B8.

Functionally, binds to 23S rRNA. Forms part of two intersubunit bridges in the 70S ribosome. The chain is Large ribosomal subunit protein uL14 from Aquifex pyrophilus.